Here is a 255-residue protein sequence, read N- to C-terminus: NAD kinase (255 aa).

D44 functions as the Proton acceptor in the catalytic mechanism. NAD(+) is bound by residues 44-45, H49, 114-115, D144, A152, 155-160, and Q216; these read DG, NE, and SAYNLS.

The protein belongs to the NAD kinase family. It depends on a divalent metal cation as a cofactor.

The protein resides in the cytoplasm. The catalysed reaction is NAD(+) + ATP = ADP + NADP(+) + H(+). In terms of biological role, involved in the regulation of the intracellular balance of NAD and NADP, and is a key enzyme in the biosynthesis of NADP. Catalyzes specifically the phosphorylation on 2'-hydroxyl of the adenosine moiety of NAD to yield NADP. The sequence is that of NAD kinase from Rickettsia akari (strain Hartford).